The sequence spans 123 residues: uncharacterized protein (123 aa).

2 disordered regions span residues 1 to 33 (MAPP…RRRK) and 82 to 123 (EKAA…EDKS). A compositionally biased stretch (basic residues) spans 18 to 33 (KLFKRRRVLSRDRRRK).

This is an uncharacterized protein from Mus musculus (Mouse).